The following is a 173-amino-acid chain: Translation initiation factor IF-3 (173 aa).

This sequence belongs to the IF-3 family. In terms of assembly, monomer.

It is found in the cytoplasm. Its function is as follows. IF-3 binds to the 30S ribosomal subunit and shifts the equilibrium between 70S ribosomes and their 50S and 30S subunits in favor of the free subunits, thus enhancing the availability of 30S subunits on which protein synthesis initiation begins. This is Translation initiation factor IF-3 from Parvibaculum lavamentivorans (strain DS-1 / DSM 13023 / NCIMB 13966).